A 188-amino-acid chain; its full sequence is UPF0301 protein CPn_0139/CP_0633/CPj0139/CpB0140 (188 aa).

The protein belongs to the UPF0301 (AlgH) family.

The protein is UPF0301 protein CPn_0139/CP_0633/CPj0139/CpB0140 of Chlamydia pneumoniae (Chlamydophila pneumoniae).